We begin with the raw amino-acid sequence, 325 residues long: Dimethylsulfide dehydrogenase subunit beta (325 aa).

4Fe-4S ferredoxin-type domains lie at 6 to 35 (ISMV…RNGR), 123 to 154 (SYYF…KRQE), and 156 to 185 (GIVL…FNEQ). Residues Cys15, Cys18, Cys21, Cys25, Cys132, Cys135, and Cys140 each contribute to the [4Fe-4S] cluster site. Cys144, Cys165, and Cys171 together coordinate [3Fe-4S] cluster. [4Fe-4S] cluster is bound by residues Cys175, Cys192, Cys195, Cys207, and Cys211.

Heterotrimer of alpha, beta and gamma subunits. The cofactor is [3Fe-4S] cluster. Requires [4Fe-4S] cluster as cofactor.

Its subcellular location is the periplasm. Functionally, electron transfer subunit of the dehydrogenase during anaerobic growth on dimethyl sulfide. In Rhodovulum sulfidophilum (Rhodobacter sulfidophilus), this protein is Dimethylsulfide dehydrogenase subunit beta (ddhB).